A 461-amino-acid polypeptide reads, in one-letter code: F-box protein At3g62230 (461 aa).

An F-box domain is found at 7 to 55 (VDIISTLSDFLLVLIISNLSFKEALSTSRLSTRWRHICRETRNISFRED).

In terms of assembly, part of a SCF (ASK-cullin-F-box) protein ligase complex. Interacts with ASK4.

It localises to the nucleus. It functions in the pathway protein modification; protein ubiquitination. Functionally, component of SCF(ASK-cullin-F-box) E3 ubiquitin ligase complexes, which may mediate the ubiquitination and subsequent proteasomal degradation of target proteins. The chain is F-box protein At3g62230 from Arabidopsis thaliana (Mouse-ear cress).